Reading from the N-terminus, the 1043-residue chain is Carbamoyl phosphate synthase arginine-specific large chain (1043 aa).

The tract at residues 1-402 (MPKDSSLQSI…AFQKAVQSLE (402 aa)) is carboxyphosphate synthetic domain. Positions 134-328 (RALMHELGEP…IAALPAKLAV (195 aa)) constitute an ATP-grasp 1 domain. R170, G176, G177, R209, V211, E216, G242, I243, H244, Q285, and E299 together coordinate ATP. 3 residues coordinate Mg(2+): Q285, E299, and N301. 3 residues coordinate Mn(2+): Q285, E299, and N301. Oligomerization domain regions lie at residues 403 to 549 (GKNN…GEDE) and 403 to 550 (GKNN…EDER). Carbamoyl phosphate synthetic domain regions lie at residues 550–932 (RKQP…YPYL) and 551–932 (KQPS…YPYL). Positions 676-863 (YQLLEELDIP…LAQIATKLLL (188 aa)) constitute an ATP-grasp 2 domain. Residues R712, A748, L750, E754, G779, V780, H781, S782, Q822, and E834 each contribute to the ATP site. Mg(2+) is bound by residues Q822, E834, and N836. Residues Q822, E834, and N836 each coordinate Mn(2+). An MGS-like domain is found at 930–1037 (PYLQKKANAN…HGWLEKKKQA (108 aa)). The allosteric domain stretch occupies residues 933–1043 (QKKANANEVY…KKQAEQAVIA (111 aa)).

It belongs to the CarB family. As to quaternary structure, composed of two chains; the small (or glutamine) chain promotes the hydrolysis of glutamine to ammonia, which is used by the large (or ammonia) chain to synthesize carbamoyl phosphate. Tetramer of heterodimers (alpha,beta)4. Mg(2+) is required as a cofactor. The cofactor is Mn(2+).

The enzyme catalyses hydrogencarbonate + L-glutamine + 2 ATP + H2O = carbamoyl phosphate + L-glutamate + 2 ADP + phosphate + 2 H(+). The catalysed reaction is hydrogencarbonate + NH4(+) + 2 ATP = carbamoyl phosphate + 2 ADP + phosphate + 2 H(+). The protein operates within amino-acid biosynthesis; L-arginine biosynthesis; carbamoyl phosphate from bicarbonate: step 1/1. Large subunit of the glutamine-dependent carbamoyl phosphate synthetase (CPSase). CPSase catalyzes the formation of carbamoyl phosphate from the ammonia moiety of glutamine, carbonate, and phosphate donated by ATP, constituting the first step of the biosynthetic pathway leading to arginine and/or urea. The large subunit (synthetase) binds the substrates ammonia (free or transferred from glutamine from the small subunit), hydrogencarbonate and ATP and carries out an ATP-coupled ligase reaction, activating hydrogencarbonate by forming carboxy phosphate which reacts with ammonia to form carbamoyl phosphate. In Geobacillus stearothermophilus (Bacillus stearothermophilus), this protein is Carbamoyl phosphate synthase arginine-specific large chain (carB).